We begin with the raw amino-acid sequence, 296 residues long: Tubulin polyglutamylase complex subunit 2 (296 aa).

Positions 254-265 (SKNKILIPKKKG) are enriched in basic residues. The interval 254–296 (SKNKILIPKKKGPVPPASGQKGPGPLPPPTSKPTTGSGNPVRK) is disordered. A compositionally biased stretch (low complexity) spans 285–296 (KPTTGSGNPVRK).

Part of the neuronal tubulin polyglutamylase complex which contains TPGS1, TPGS2, TTLL1, LRRC49 and NICN1. Interacts with CSTPP1 and LRRC49.

The protein resides in the cytoplasm. It is found in the cytoskeleton. The protein localises to the microtubule organizing center. Its subcellular location is the centrosome. It localises to the centriolar satellite. In terms of biological role, subunit of the tubulin polyglutamylase complex (TPGC). The complex mediates cilia and flagella polyglutamylation which is essential for their biogenesis and motility. The chain is Tubulin polyglutamylase complex subunit 2 (Tpgs2) from Mus musculus (Mouse).